We begin with the raw amino-acid sequence, 199 residues long: dITP/XTP pyrophosphatase (199 aa).

8 to 13 contributes to the substrate binding site; sequence TSNINK. Asp68 functions as the Proton acceptor in the catalytic mechanism. A Mg(2+)-binding site is contributed by Asp68. Residues Ser69, 155 to 158, Lys177, and 182 to 183 each bind substrate; these read FGYN and HR.

Belongs to the HAM1 NTPase family. In terms of assembly, homodimer. The cofactor is Mg(2+).

It carries out the reaction XTP + H2O = XMP + diphosphate + H(+). The catalysed reaction is dITP + H2O = dIMP + diphosphate + H(+). It catalyses the reaction ITP + H2O = IMP + diphosphate + H(+). In terms of biological role, pyrophosphatase that catalyzes the hydrolysis of nucleoside triphosphates to their monophosphate derivatives, with a high preference for the non-canonical purine nucleotides XTP (xanthosine triphosphate), dITP (deoxyinosine triphosphate) and ITP. Seems to function as a house-cleaning enzyme that removes non-canonical purine nucleotides from the nucleotide pool, thus preventing their incorporation into DNA/RNA and avoiding chromosomal lesions. The chain is dITP/XTP pyrophosphatase from Borrelia recurrentis (strain A1).